Consider the following 428-residue polypeptide: Enolase (428 aa).

Position 164 (Gln-164) interacts with (2R)-2-phosphoglycerate. Glu-206 (proton donor) is an active-site residue. Residues Asp-243, Glu-286, and Asp-313 each contribute to the Mg(2+) site. (2R)-2-phosphoglycerate is bound by residues Lys-338, Arg-367, Ser-368, and Lys-389. Lys-338 functions as the Proton acceptor in the catalytic mechanism.

The protein belongs to the enolase family. Requires Mg(2+) as cofactor.

The protein resides in the cytoplasm. Its subcellular location is the secreted. It is found in the cell surface. The catalysed reaction is (2R)-2-phosphoglycerate = phosphoenolpyruvate + H2O. It participates in carbohydrate degradation; glycolysis; pyruvate from D-glyceraldehyde 3-phosphate: step 4/5. Catalyzes the reversible conversion of 2-phosphoglycerate (2-PG) into phosphoenolpyruvate (PEP). It is essential for the degradation of carbohydrates via glycolysis. The protein is Enolase of Dehalococcoides mccartyi (strain ATCC BAA-2266 / KCTC 15142 / 195) (Dehalococcoides ethenogenes (strain 195)).